The following is a 274-amino-acid chain: Membrane protein insertase YidC 2 (274 aa).

The first 20 residues, 1–20 (MKKKLKLTSLLGLSLLIMTA), serve as a signal peptide directing secretion. Residue C21 is the site of N-palmitoyl cysteine attachment. C21 carries S-diacylglycerol cysteine lipidation. The next 4 helical transmembrane spans lie at 56 to 76 (ISIG…LLPV), 128 to 148 (SDSL…FQAL), 167 to 187 (VDTT…STWL), and 205 to 225 (GIPV…ALYW).

It belongs to the OXA1/ALB3/YidC family. Type 2 subfamily.

Its subcellular location is the cell membrane. Required for the insertion and/or proper folding and/or complex formation of integral membrane proteins into the membrane. Involved in integration of membrane proteins that insert both dependently and independently of the Sec translocase complex, as well as at least some lipoproteins. This Streptococcus pneumoniae serotype 4 (strain ATCC BAA-334 / TIGR4) protein is Membrane protein insertase YidC 2.